A 176-amino-acid polypeptide reads, in one-letter code: PPE family protein PPE57 (176 aa).

This sequence belongs to the mycobacterial PPE family. As to quaternary structure, interacts with human TLR2.

Its subcellular location is the secreted. It localises to the cell wall. It is found in the cell surface. Plays a key role in regulating innate and adaptive immune responses through human Toll-like receptor 2 (TLR2). Interacts with TLR2, leading to the subsequent activation of the mitogen-activated protein kinase (MAPK) and nuclear factor kappa B (NF-kappa-B) signaling pathways. Induces macrophage activation by augmenting the expression of several cell surface molecules (CD40, CD80, CD86 and MHC class II) and pro-inflammatory cytokines (TNF-alpha, IL-6 and IL-12p40) within macrophages. Also participates in adaptive immunity by directing Th1-polarised immune responses. Stimulates specific humoral and cellular immune responses in tuberculosis (TB) patients. Induces a strong IgG(1) antibody response and an increased Th1/Th2 type immune response in mice. The polypeptide is PPE family protein PPE57 (Mycobacterium tuberculosis (strain ATCC 25618 / H37Rv)).